The sequence spans 404 residues: Cysteine desulfurase IscS (404 aa).

Pyridoxal 5'-phosphate contacts are provided by residues 75 to 76 (AT), asparagine 155, glutamine 183, and 203 to 205 (TGH). Position 206 is an N6-(pyridoxal phosphate)lysine (lysine 206). Residue threonine 243 coordinates pyridoxal 5'-phosphate. Residue cysteine 328 is the Cysteine persulfide intermediate of the active site. Cysteine 328 provides a ligand contact to [2Fe-2S] cluster.

The protein belongs to the class-V pyridoxal-phosphate-dependent aminotransferase family. NifS/IscS subfamily. Homodimer. Forms a heterotetramer with IscU, interacts with other sulfur acceptors. It depends on pyridoxal 5'-phosphate as a cofactor.

It localises to the cytoplasm. The enzyme catalyses (sulfur carrier)-H + L-cysteine = (sulfur carrier)-SH + L-alanine. It functions in the pathway cofactor biosynthesis; iron-sulfur cluster biosynthesis. In terms of biological role, master enzyme that delivers sulfur to a number of partners involved in Fe-S cluster assembly, tRNA modification or cofactor biosynthesis. Catalyzes the removal of elemental sulfur atoms from cysteine to produce alanine. Functions as a sulfur delivery protein for Fe-S cluster synthesis onto IscU, an Fe-S scaffold assembly protein, as well as other S acceptor proteins. The protein is Cysteine desulfurase IscS of Cronobacter sakazakii (strain ATCC BAA-894) (Enterobacter sakazakii).